Here is a 466-residue protein sequence, read N- to C-terminus: Vacuolar protein sorting-associated protein 30 (466 aa).

Residues S35–I55 form a disordered region. Positions D43–R53 are enriched in basic and acidic residues. The stretch at D149–D258 forms a coiled coil. The tract at residues L279–K463 is BARA. The required for membrane-association, autophagic function during starvation and normal autophagosome morphology stretch occupies residues W439–A464.

This sequence belongs to the beclin family. Component of the autophagy-specific VPS34 PI3-kinase complex I; and of the VPS34 PI3-kinase complex II.

Its subcellular location is the endosome membrane. It localises to the vacuole membrane. The protein resides in the preautophagosomal structure membrane. Its function is as follows. Required for cytoplasm to vacuole transport (Cvt), autophagy, nucleophagy, and mitophagy, as a part of the autophagy-specific VPS34 PI3-kinase complex I. This complex is essential to recruit the ATG8-phosphatidylinositol conjugate and the ATG12-ATG5 conjugate to the pre-autophagosomal structure. Also involved in endosome-to-Golgi retrograde transport as part of the VPS34 PI3-kinase complex II. This chain is Vacuolar protein sorting-associated protein 30, found in Kluyveromyces marxianus (strain DMKU3-1042 / BCC 29191 / NBRC 104275) (Yeast).